The chain runs to 457 residues: ATP-dependent protease ATPase subunit HslU (457 aa).

Residues Ile-18 and 60-65 (GVGKTE) contribute to the ATP site. A disordered region spans residues 142 to 171 (KQPGMGFFNPAAPEEQEEQPSADQSSTREK). ATP-binding residues include Asp-269, Glu-335, and Arg-407.

Belongs to the ClpX chaperone family. HslU subfamily. As to quaternary structure, a double ring-shaped homohexamer of HslV is capped on each side by a ring-shaped HslU homohexamer. The assembly of the HslU/HslV complex is dependent on binding of ATP.

Its subcellular location is the cytoplasm. ATPase subunit of a proteasome-like degradation complex; this subunit has chaperone activity. The binding of ATP and its subsequent hydrolysis by HslU are essential for unfolding of protein substrates subsequently hydrolyzed by HslV. HslU recognizes the N-terminal part of its protein substrates and unfolds these before they are guided to HslV for hydrolysis. The protein is ATP-dependent protease ATPase subunit HslU of Maridesulfovibrio salexigens (strain ATCC 14822 / DSM 2638 / NCIMB 8403 / VKM B-1763) (Desulfovibrio salexigens).